The chain runs to 220 residues: Probable nicotinate-nucleotide adenylyltransferase (220 aa).

The protein belongs to the NadD family.

It catalyses the reaction nicotinate beta-D-ribonucleotide + ATP + H(+) = deamido-NAD(+) + diphosphate. It functions in the pathway cofactor biosynthesis; NAD(+) biosynthesis; deamido-NAD(+) from nicotinate D-ribonucleotide: step 1/1. In terms of biological role, catalyzes the reversible adenylation of nicotinate mononucleotide (NaMN) to nicotinic acid adenine dinucleotide (NaAD). This Laribacter hongkongensis (strain HLHK9) protein is Probable nicotinate-nucleotide adenylyltransferase.